The chain runs to 96 residues: Prokineticin Bm8-d (96 aa).

A signal peptide spans Met-1 to Gly-19. 5 cysteine pairs are disulfide-bonded: Cys-26-Cys-38, Cys-32-Cys-50, Cys-37-Cys-78, Cys-60-Cys-86, and Cys-80-Cys-95.

The protein belongs to the AVIT (prokineticin) family. In terms of tissue distribution, expressed by the skin glands.

It is found in the secreted. Its function is as follows. Potent agonist for both PKR1/PROKR1 and PKR2/PROKR2, and inducer of a potent and long-lasting hyperalgesia. Also potentiates capsaicin-induced TRPV1 current, when tested on DRG neurons. At subnanomolar concentrations, this protein both induces potent chemotaxis of macrophages and stimulates LPS-induced production of the pro-inflammatory cytokines IL-1 and IL-12. In vivo, potently stimulates the contraction of the guinea-pig gastrointestinal (GI) smooth muscle (nanomolar concentration). This chain is Prokineticin Bm8-d, found in Bombina maxima (Giant fire-bellied toad).